The sequence spans 83 residues: Cytochrome b559 subunit alpha (83 aa).

The chain crosses the membrane as a helical span at residues 21-35 (VIHSITIPSLFIAGW). A heme-binding site is contributed by His-23.

The protein belongs to the PsbE/PsbF family. In terms of assembly, heterodimer of an alpha subunit and a beta subunit. PSII is composed of 1 copy each of membrane proteins PsbA, PsbB, PsbC, PsbD, PsbE, PsbF, PsbH, PsbI, PsbJ, PsbK, PsbL, PsbM, PsbT, PsbX, PsbY, PsbZ, Psb30/Ycf12, at least 3 peripheral proteins of the oxygen-evolving complex and a large number of cofactors. It forms dimeric complexes. Heme b is required as a cofactor.

It is found in the plastid. It localises to the chloroplast thylakoid membrane. Its function is as follows. This b-type cytochrome is tightly associated with the reaction center of photosystem II (PSII). PSII is a light-driven water:plastoquinone oxidoreductase that uses light energy to abstract electrons from H(2)O, generating O(2) and a proton gradient subsequently used for ATP formation. It consists of a core antenna complex that captures photons, and an electron transfer chain that converts photonic excitation into a charge separation. This chain is Cytochrome b559 subunit alpha, found in Physcomitrium patens (Spreading-leaved earth moss).